The following is a 145-amino-acid chain: Acidic phospholipase A2 (145 aa).

An N-terminal signal peptide occupies residues 1–19 (MNPAHLLILSAVCVSLLGA). Residues 20-27 (ANVPPQHL) constitute a propeptide that is removed on maturation. Intrachain disulfides connect Cys-38–Cys-97, Cys-52–Cys-144, Cys-54–Cys-70, Cys-69–Cys-125, Cys-76–Cys-118, Cys-86–Cys-111, and Cys-104–Cys-116. Ca(2+)-binding residues include Tyr-53, Gly-55, and Gly-57. His-73 is an active-site residue. Position 74 (Asp-74) interacts with Ca(2+). Asp-119 is a catalytic residue.

This sequence belongs to the phospholipase A2 family. Group I subfamily. D49 sub-subfamily. Ca(2+) is required as a cofactor. In terms of tissue distribution, expressed by the venom gland.

Its subcellular location is the secreted. The catalysed reaction is a 1,2-diacyl-sn-glycero-3-phosphocholine + H2O = a 1-acyl-sn-glycero-3-phosphocholine + a fatty acid + H(+). PLA2 catalyzes the calcium-dependent hydrolysis of the 2-acyl groups in 3-sn-phosphoglycerides. This chain is Acidic phospholipase A2, found in Bungarus multicinctus (Many-banded krait).